The chain runs to 280 residues: Large ribosomal subunit protein uL2 (280 aa).

3 disordered regions span residues 1-20, 29-58, and 225-280; these read MAIR…SVSM, PEKS…GGGH, and VMNP…NKKR. The span at 45–58 shows a compositional bias: basic residues; it reads SHGHITTRHRGGGH. Residues 253 to 269 are compositionally biased toward basic and acidic residues; that stretch reads KEGRTRRPKRYSDDMIV. Basic residues predominate over residues 270–280; it reads RRRRANKNKKR.

The protein belongs to the universal ribosomal protein uL2 family. As to quaternary structure, part of the 50S ribosomal subunit. Forms a bridge to the 30S subunit in the 70S ribosome.

In terms of biological role, one of the primary rRNA binding proteins. Required for association of the 30S and 50S subunits to form the 70S ribosome, for tRNA binding and peptide bond formation. It has been suggested to have peptidyltransferase activity; this is somewhat controversial. Makes several contacts with the 16S rRNA in the 70S ribosome. This chain is Large ribosomal subunit protein uL2, found in Corynebacterium efficiens (strain DSM 44549 / YS-314 / AJ 12310 / JCM 11189 / NBRC 100395).